A 66-amino-acid chain; its full sequence is Large ribosomal subunit protein bL33c (66 aa).

Belongs to the bacterial ribosomal protein bL33 family.

It is found in the plastid. The protein resides in the chloroplast. The chain is Large ribosomal subunit protein bL33c from Aethionema grandiflorum (Persian stone-cress).